The primary structure comprises 100 residues: Large ribosomal subunit protein uL23 (100 aa).

It belongs to the universal ribosomal protein uL23 family. As to quaternary structure, part of the 50S ribosomal subunit. Contacts protein L29, and trigger factor when it is bound to the ribosome.

In terms of biological role, one of the early assembly proteins it binds 23S rRNA. One of the proteins that surrounds the polypeptide exit tunnel on the outside of the ribosome. Forms the main docking site for trigger factor binding to the ribosome. This is Large ribosomal subunit protein uL23 from Vibrio cholerae serotype O1 (strain ATCC 39541 / Classical Ogawa 395 / O395).